Here is a 228-residue protein sequence, read N- to C-terminus: Probable septum site-determining protein MinC (228 aa).

Belongs to the MinC family. As to quaternary structure, interacts with MinD and FtsZ.

Functionally, cell division inhibitor that blocks the formation of polar Z ring septums. Rapidly oscillates between the poles of the cell to destabilize FtsZ filaments that have formed before they mature into polar Z rings. Prevents FtsZ polymerization. The sequence is that of Probable septum site-determining protein MinC from Pectobacterium atrosepticum (strain SCRI 1043 / ATCC BAA-672) (Erwinia carotovora subsp. atroseptica).